Reading from the N-terminus, the 97-residue chain is Co-chaperonin GroES (97 aa).

This sequence belongs to the GroES chaperonin family. In terms of assembly, heptamer of 7 subunits arranged in a ring. Interacts with the chaperonin GroEL.

It is found in the cytoplasm. In terms of biological role, together with the chaperonin GroEL, plays an essential role in assisting protein folding. The GroEL-GroES system forms a nano-cage that allows encapsulation of the non-native substrate proteins and provides a physical environment optimized to promote and accelerate protein folding. GroES binds to the apical surface of the GroEL ring, thereby capping the opening of the GroEL channel. The chain is Co-chaperonin GroES from Buchnera aphidicola subsp. Geoica urticularia.